The chain runs to 255 residues: MGAALELREVDSELVIKRFTSALPYYEKYAVAQHRIGERLADLLTATGRHHFEHVLEYGCGCGVYTRQLAQTVTVKQWTLNDLCPVCEEYIRVSPVSFYAGEAETMPHTDTYDLITSASAFQWFKDPESFIRTVAGLLRPDGIFLFNTFSPDNLPEIRTITNRGLHYPSTEALMKWLGAAFSAVYKHEEQIVLTFDSPRDVLMHLKRTGVTATPRHEEVWTRSRLARFDQAYRERFSTPDGQVTLTYTPLYFLAK.

Belongs to the methyltransferase superfamily.

The catalysed reaction is malonyl-[ACP] + S-adenosyl-L-methionine = malonyl-[ACP] methyl ester + S-adenosyl-L-homocysteine. The protein operates within cofactor biosynthesis; biotin biosynthesis. Its function is as follows. Converts the free carboxyl group of a malonyl-thioester to its methyl ester by transfer of a methyl group from S-adenosyl-L-methionine (SAM). It allows to synthesize pimeloyl-ACP via the fatty acid synthetic pathway. In Porphyromonas gingivalis (strain ATCC BAA-308 / W83), this protein is Malonyl-[acyl-carrier protein] O-methyltransferase.